The chain runs to 155 residues: Small ribosomal subunit protein uS7c (155 aa).

Belongs to the universal ribosomal protein uS7 family. In terms of assembly, part of the 30S ribosomal subunit.

The protein localises to the plastid. It is found in the chloroplast. In terms of biological role, one of the primary rRNA binding proteins, it binds directly to 16S rRNA where it nucleates assembly of the head domain of the 30S subunit. This chain is Small ribosomal subunit protein uS7c (rps7), found in Spirogyra maxima (Green alga).